The primary structure comprises 244 residues: 14-3-3 protein beta/alpha-A (244 aa).

M1 carries the N-acetylmethionine modification.

It belongs to the 14-3-3 family. Homodimer, and heterodimer with other family members.

The protein localises to the cytoplasm. Its function is as follows. Adapter protein implicated in the regulation of a large spectrum of both general and specialized signaling pathways. Binds to a large number of partners, usually by recognition of a phosphoserine or phosphothreonine motif. Binding generally results in the modulation of the activity of the binding partner. This chain is 14-3-3 protein beta/alpha-A (ywhab-a), found in Xenopus laevis (African clawed frog).